A 254-amino-acid polypeptide reads, in one-letter code: Wall-associated protein (254 aa).

The tract at residues 25–46 (DRVEPKEEPPKVPQAPKRDLKP) is disordered.

The protein localises to the secreted. It localises to the cell wall. The chain is Wall-associated protein (wapA') from Geobacillus stearothermophilus (Bacillus stearothermophilus).